Consider the following 80-residue polypeptide: Acyl carrier protein (80 aa).

The region spanning 4-79 (QEIFEKVKAV…DAVEYIKAKL (76 aa)) is the Carrier domain. S39 bears the O-(pantetheine 4'-phosphoryl)serine mark.

The protein belongs to the acyl carrier protein (ACP) family. Post-translationally, 4'-phosphopantetheine is transferred from CoA to a specific serine of apo-ACP by AcpS. This modification is essential for activity because fatty acids are bound in thioester linkage to the sulfhydryl of the prosthetic group.

Its subcellular location is the cytoplasm. It functions in the pathway lipid metabolism; fatty acid biosynthesis. Its function is as follows. Carrier of the growing fatty acid chain in fatty acid biosynthesis. The sequence is that of Acyl carrier protein from Thermus thermophilus (strain ATCC BAA-163 / DSM 7039 / HB27).